Reading from the N-terminus, the 640-residue chain is Spindle assembly abnormal protein 6 homolog (640 aa).

A PISA domain is found at 40–92; it reads VHKKDLAVRLTDDADPFFLYNLVISEEDFQSLKSQQGLLVDFSAFPQKFIDLL. Residues 154–475 are a coiled coil; sequence LARCLKCLKE…KQLLKTNENV (322 aa).

As to quaternary structure, nine homodimers form a cartwheel structure with an internal diameter of 23 nM and radial spokes connecting to the microtubule triplets.

It localises to the cytoplasm. Its subcellular location is the cytoskeleton. The protein resides in the microtubule organizing center. It is found in the centrosome. In terms of biological role, central scaffolding component of the centrioles ensuring their 9-fold symmetry. Required for centrosome biogenesis and duplication: required both for mother-centriole-dependent centriole duplication and deuterosome-dependent centriole amplification in multiciliated cells. This Gallus gallus (Chicken) protein is Spindle assembly abnormal protein 6 homolog (SASS6).